We begin with the raw amino-acid sequence, 709 residues long: MFEKPVVKTFQYGNHTVTLETGVMARQATAAVMATMDDTAVFVSVVGKKEAVVGQDFFPLTVNYQERTYAAGKIPGGFFKREGRPSEGETLIARLIDRPIRPLFPDGFTNEVQVIATVVSVNPDVQPDIISMIGTSAALAISGLPFNGPIGAARVGHIDGQLVLNPSEKELKQSRLDLVVAGTDNAVLMVESEAQILTEEEMLAAVVFGHDQQQAVIKAINEFAAEVATPAWEWVAPAENTELKAKVAALAETRLVEAYQITEKMARYDRIHEISAEVTAALLAENEALDTKEIHTIFHDLEKTVVRRSIIAGNPRIDGREKDMVRALDVRTGVLPRTHGSALFTRGETQALVTATLGTQRDAQIIDELTGEKKDHFLLHYNFPPYCVGETGFVGSPKRREIGHGRLAKRGIAAVMPSPEEFPYTVRVVSEITESNGSSSMASVCGSSLALMDAGVPIKASVAGIAMGLVKEENDFVVLSDILGDEDHLGDMDFKVAGTATGVTALQMDIKIEGITKEIMQIALNQAKGARLHILSVMDQAISAARSDISEFAPRIHTMKISVEKIKDVIGKGGAVIRQLTEETGTTIEIEDDGTIKIAATDGDQAKEAIRRIQEITAEVEVGVIYTGKVARLADFGAFVTILPGKDGLVHISQIADKRVEKVSDYLTEGQEVQVKVLEIDRQGRVRLSMKEAVETSDAAAAEVAPQAE.

Residues aspartate 487 and aspartate 493 each coordinate Mg(2+). One can recognise a KH domain in the interval 554 to 613; that stretch reads PRIHTMKISVEKIKDVIGKGGAVIRQLTEETGTTIEIEDDGTIKIAATDGDQAKEAIRRI. An S1 motif domain is found at 623-691; the sequence is GVIYTGKVAR…RQGRVRLSMK (69 aa).

It belongs to the polyribonucleotide nucleotidyltransferase family. In terms of assembly, component of the RNA degradosome, which is a multiprotein complex involved in RNA processing and mRNA degradation. Mg(2+) serves as cofactor.

It localises to the cytoplasm. It carries out the reaction RNA(n+1) + phosphate = RNA(n) + a ribonucleoside 5'-diphosphate. Involved in mRNA degradation. Catalyzes the phosphorolysis of single-stranded polyribonucleotides processively in the 3'- to 5'-direction. The chain is Polyribonucleotide nucleotidyltransferase from Vibrio cholerae serotype O1 (strain ATCC 39315 / El Tor Inaba N16961).